The sequence spans 151 residues: Deoxyuridine 5'-triphosphate nucleotidohydrolase (151 aa).

Substrate is bound by residues 69 to 71 (RSG), asparagine 82, and 86 to 88 (TID).

Belongs to the dUTPase family. Mg(2+) serves as cofactor.

It carries out the reaction dUTP + H2O = dUMP + diphosphate + H(+). It participates in pyrimidine metabolism; dUMP biosynthesis; dUMP from dCTP (dUTP route): step 2/2. This enzyme is involved in nucleotide metabolism: it produces dUMP, the immediate precursor of thymidine nucleotides and it decreases the intracellular concentration of dUTP so that uracil cannot be incorporated into DNA. This is Deoxyuridine 5'-triphosphate nucleotidohydrolase from Rhodospirillum centenum (strain ATCC 51521 / SW).